Consider the following 393-residue polypeptide: tRNA(Met) cytidine acetate ligase (393 aa).

Positions 81, 142, and 167 each coordinate ATP.

It belongs to the TmcAL family.

It is found in the cytoplasm. It carries out the reaction cytidine(34) in elongator tRNA(Met) + acetate + ATP = N(4)-acetylcytidine(34) in elongator tRNA(Met) + AMP + diphosphate. Functionally, catalyzes the formation of N(4)-acetylcytidine (ac(4)C) at the wobble position of elongator tRNA(Met), using acetate and ATP as substrates. First activates an acetate ion to form acetyladenylate (Ac-AMP) and then transfers the acetyl group to tRNA to form ac(4)C34. The protein is tRNA(Met) cytidine acetate ligase of Bacillus cytotoxicus (strain DSM 22905 / CIP 110041 / 391-98 / NVH 391-98).